Here is a 333-residue protein sequence, read N- to C-terminus: Trimethylamine N-oxide-binding protein (333 aa).

The N-terminal stretch at 1–42 (MRLFREIAANDPGPTGRMKNMKTFTTALATGVLALCPLAALA) is a signal peptide. The trimethylamine N-oxide site is built by Trp55, Trp102, Glu131, Trp177, and Trp222. Ca(2+) contacts are provided by Pro249, Val251, Asn254, Ala257, and Asp260.

In terms of assembly, the complex is probably composed of two ATP-binding proteins (TmoW), two transmembrane proteins (TmoV) and a solute-binding protein (TmoX). Monomer in solution, but forms homodimers in crystals.

The protein localises to the periplasm. Binds a Ca(2+) ion, which has little effect on either the binding affinity or the secondary structure, but plays an important role in maintaining the stability of TmoX. It may modulate the protein stability in response to biological needs and environmental changes. Thermostability is dramatically decreased when Ca(2+) is removed by EDTA. Part of the ABC transporter complex TmoXWV involved in trimethylamine N-oxide (TMAO) import. Is specific for TMAO and essential for TMAO metabolism. Binds TMAO with high affinity. In vitro, also presents a high binding affinity for choline, however this transporter seems specific for TMAO and the choline-binding affinity presented by recombinant TmoX may not make physiological sense. This is Trimethylamine N-oxide-binding protein from Ruegeria pomeroyi (strain ATCC 700808 / DSM 15171 / DSS-3) (Silicibacter pomeroyi).